The following is a 353-amino-acid chain: Photosystem II D2 protein (353 aa).

N-acetylthreonine is present on Thr-2. Phosphothreonine is present on Thr-2. A helical membrane pass occupies residues 41 to 61 (TAYFALGGWFTGTTFVTSWYT). His-118 contacts chlorophyll a. Residues 125 to 141 (GFMLRQFELARSVQLRP) form a helical membrane-spanning segment. The pheophytin a site is built by Gln-130 and Asn-143. A helical transmembrane segment spans residues 153-166 (VFVSVFLIYPLGQS). A chlorophyll a-binding site is contributed by His-198. Residues 208-228 (AALLCAIHGATVENTLFEDGD) form a helical membrane-spanning segment. A plastoquinone contacts are provided by His-215 and Phe-262. His-215 contributes to the Fe cation binding site. His-269 serves as a coordination point for Fe cation. A helical membrane pass occupies residues 279 to 295 (GLWMSAIGVVGLALNLR).

The protein belongs to the reaction center PufL/M/PsbA/D family. As to quaternary structure, PSII is composed of 1 copy each of membrane proteins PsbA, PsbB, PsbC, PsbD, PsbE, PsbF, PsbH, PsbI, PsbJ, PsbK, PsbL, PsbM, PsbT, PsbX, PsbY, PsbZ, Psb30/Ycf12, at least 3 peripheral proteins of the oxygen-evolving complex and a large number of cofactors. It forms dimeric complexes. The cofactor is The D1/D2 heterodimer binds P680, chlorophylls that are the primary electron donor of PSII, and subsequent electron acceptors. It shares a non-heme iron and each subunit binds pheophytin, quinone, additional chlorophylls, carotenoids and lipids. There is also a Cl(-1) ion associated with D1 and D2, which is required for oxygen evolution. The PSII complex binds additional chlorophylls, carotenoids and specific lipids..

Its subcellular location is the plastid. The protein localises to the chloroplast thylakoid membrane. It carries out the reaction 2 a plastoquinone + 4 hnu + 2 H2O = 2 a plastoquinol + O2. Functionally, photosystem II (PSII) is a light-driven water:plastoquinone oxidoreductase that uses light energy to abstract electrons from H(2)O, generating O(2) and a proton gradient subsequently used for ATP formation. It consists of a core antenna complex that captures photons, and an electron transfer chain that converts photonic excitation into a charge separation. The D1/D2 (PsbA/PsbD) reaction center heterodimer binds P680, the primary electron donor of PSII as well as several subsequent electron acceptors. D2 is needed for assembly of a stable PSII complex. In Adiantum capillus-veneris (Maidenhair fern), this protein is Photosystem II D2 protein.